The sequence spans 109 residues: Small ribosomal subunit protein eS25 (109 aa).

Positions 1 to 36 are disordered; that stretch reads MGGASKKPISTVEKRMKKMAEEQQKKQQKRATTKTG. Residues 12 to 25 show a composition bias toward basic and acidic residues; that stretch reads VEKRMKKMAEEQQK.

The protein belongs to the eukaryotic ribosomal protein eS25 family.

This chain is Small ribosomal subunit protein eS25 (rps25e), found in Sulfurisphaera tokodaii (strain DSM 16993 / JCM 10545 / NBRC 100140 / 7) (Sulfolobus tokodaii).